The following is a 407-amino-acid chain: 1-deoxy-D-xylulose 5-phosphate reductoisomerase (407 aa).

NADPH contacts are provided by threonine 25, glycine 26, serine 27, isoleucine 28, asparagine 53, and asparagine 136. Residue lysine 137 coordinates 1-deoxy-D-xylulose 5-phosphate. Position 138 (glutamate 138) interacts with NADPH. Aspartate 162 lines the Mn(2+) pocket. Residues serine 163, glutamate 164, serine 188, and histidine 211 each coordinate 1-deoxy-D-xylulose 5-phosphate. Glutamate 164 lines the Mn(2+) pocket. Glycine 217 is a binding site for NADPH. 1-deoxy-D-xylulose 5-phosphate-binding residues include serine 224, asparagine 229, lysine 230, and glutamate 233. A Mn(2+)-binding site is contributed by glutamate 233.

This sequence belongs to the DXR family. Mg(2+) serves as cofactor. The cofactor is Mn(2+).

The catalysed reaction is 2-C-methyl-D-erythritol 4-phosphate + NADP(+) = 1-deoxy-D-xylulose 5-phosphate + NADPH + H(+). The protein operates within isoprenoid biosynthesis; isopentenyl diphosphate biosynthesis via DXP pathway; isopentenyl diphosphate from 1-deoxy-D-xylulose 5-phosphate: step 1/6. In terms of biological role, catalyzes the NADPH-dependent rearrangement and reduction of 1-deoxy-D-xylulose-5-phosphate (DXP) to 2-C-methyl-D-erythritol 4-phosphate (MEP). The protein is 1-deoxy-D-xylulose 5-phosphate reductoisomerase of Rhodopseudomonas palustris (strain BisB18).